The following is a 174-amino-acid chain: Small ribosomal subunit protein uS5 (174 aa).

Residues 16–79 (FSELIVSVRR…NAARKNMIRV (64 aa)) enclose the S5 DRBM domain.

This sequence belongs to the universal ribosomal protein uS5 family. As to quaternary structure, part of the 30S ribosomal subunit. Contacts proteins S4 and S8.

With S4 and S12 plays an important role in translational accuracy. In terms of biological role, located at the back of the 30S subunit body where it stabilizes the conformation of the head with respect to the body. The sequence is that of Small ribosomal subunit protein uS5 from Ehrlichia ruminantium (strain Gardel).